The chain runs to 64 residues: Leader peptide SpeFL (64 aa).

The Ornithine recognition loop motif lies at His-32 to His-38. Position 35 (Arg-35) interacts with L-ornithine.

Belongs to the speF operon leader peptide family. Binds ornithine in stalled 70S ribosomes, blocking the upper two-thirds of the exit tunnel. Contacts 23S rRNA and ribosomal proteins L4 and L22.

Functionally, a small protein (arrest peptide) encoded upstream of inducible ornithine carboxylase gene (speF) that controls expression of downstream genes (usually speF and potE) by transcriptional and translational attenuation. The polypeptide is Leader peptide SpeFL (Haemophilus influenzae (strain ATCC 51907 / DSM 11121 / KW20 / Rd)).